Reading from the N-terminus, the 289-residue chain is Phosphatidylserine decarboxylase proenzyme (289 aa).

Active-site charge relay system; for autoendoproteolytic cleavage activity residues include Asp89, His146, and Ser252. Ser252 functions as the Schiff-base intermediate with substrate; via pyruvic acid; for decarboxylase activity in the catalytic mechanism. Ser252 bears the Pyruvic acid (Ser); by autocatalysis mark.

This sequence belongs to the phosphatidylserine decarboxylase family. PSD-B subfamily. Prokaryotic type I sub-subfamily. In terms of assembly, heterodimer of a large membrane-associated beta subunit and a small pyruvoyl-containing alpha subunit. It depends on pyruvate as a cofactor. In terms of processing, is synthesized initially as an inactive proenzyme. Formation of the active enzyme involves a self-maturation process in which the active site pyruvoyl group is generated from an internal serine residue via an autocatalytic post-translational modification. Two non-identical subunits are generated from the proenzyme in this reaction, and the pyruvate is formed at the N-terminus of the alpha chain, which is derived from the carboxyl end of the proenzyme. The autoendoproteolytic cleavage occurs by a canonical serine protease mechanism, in which the side chain hydroxyl group of the serine supplies its oxygen atom to form the C-terminus of the beta chain, while the remainder of the serine residue undergoes an oxidative deamination to produce ammonia and the pyruvoyl prosthetic group on the alpha chain. During this reaction, the Ser that is part of the protease active site of the proenzyme becomes the pyruvoyl prosthetic group, which constitutes an essential element of the active site of the mature decarboxylase.

It is found in the cell membrane. The catalysed reaction is a 1,2-diacyl-sn-glycero-3-phospho-L-serine + H(+) = a 1,2-diacyl-sn-glycero-3-phosphoethanolamine + CO2. The protein operates within phospholipid metabolism; phosphatidylethanolamine biosynthesis; phosphatidylethanolamine from CDP-diacylglycerol: step 2/2. Functionally, catalyzes the formation of phosphatidylethanolamine (PtdEtn) from phosphatidylserine (PtdSer). The chain is Phosphatidylserine decarboxylase proenzyme from Shewanella denitrificans (strain OS217 / ATCC BAA-1090 / DSM 15013).